The chain runs to 288 residues: Transposase InsF for insertion sequence IS3fB (288 aa).

Residues 124–287 form the Integrase catalytic domain; the sequence is YASGPNQKWA…SPEQFENQNL (164 aa).

This sequence belongs to the transposase IS3/IS150/IS904 family.

Its function is as follows. Involved in the transposition of the insertion sequence IS3. This chain is Transposase InsF for insertion sequence IS3fB (insF7), found in Escherichia coli (strain K12).